The chain runs to 97 residues: Glutamyl-tRNA(Gln) amidotransferase subunit C 2 (97 aa).

Belongs to the GatC family. Heterotrimer of A, B and C subunits.

It catalyses the reaction L-glutamyl-tRNA(Gln) + L-glutamine + ATP + H2O = L-glutaminyl-tRNA(Gln) + L-glutamate + ADP + phosphate + H(+). The enzyme catalyses L-aspartyl-tRNA(Asn) + L-glutamine + ATP + H2O = L-asparaginyl-tRNA(Asn) + L-glutamate + ADP + phosphate + 2 H(+). In terms of biological role, allows the formation of correctly charged Asn-tRNA(Asn) or Gln-tRNA(Gln) through the transamidation of misacylated Asp-tRNA(Asn) or Glu-tRNA(Gln) in organisms which lack either or both of asparaginyl-tRNA or glutaminyl-tRNA synthetases. The reaction takes place in the presence of glutamine and ATP through an activated phospho-Asp-tRNA(Asn) or phospho-Glu-tRNA(Gln). The polypeptide is Glutamyl-tRNA(Gln) amidotransferase subunit C 2 (gatC2) (Clostridium acetobutylicum (strain ATCC 824 / DSM 792 / JCM 1419 / IAM 19013 / LMG 5710 / NBRC 13948 / NRRL B-527 / VKM B-1787 / 2291 / W)).